The following is a 262-amino-acid chain: Cytochrome c oxidase subunit 3 (262 aa).

The next 7 helical transmembrane spans lie at 16 to 36, 39 to 59, 83 to 103, 128 to 148, 160 to 180, 198 to 218, and 241 to 261; these read PWPY…VVYF, SQTW…IVWW, GMLL…WAFF, FSVP…VTWA, AING…LQAM, FFVA…FLAV, and WYWH…YWWG.

The protein belongs to the cytochrome c oxidase subunit 3 family. In terms of assembly, component of the cytochrome c oxidase (complex IV, CIV), a multisubunit enzyme composed of a catalytic core of 3 subunits and several supernumerary subunits. The complex exists as a monomer or a dimer and forms supercomplexes (SCs) in the inner mitochondrial membrane with ubiquinol-cytochrome c oxidoreductase (cytochrome b-c1 complex, complex III, CIII).

It is found in the mitochondrion inner membrane. It carries out the reaction 4 Fe(II)-[cytochrome c] + O2 + 8 H(+)(in) = 4 Fe(III)-[cytochrome c] + 2 H2O + 4 H(+)(out). In terms of biological role, component of the cytochrome c oxidase, the last enzyme in the mitochondrial electron transport chain which drives oxidative phosphorylation. The respiratory chain contains 3 multisubunit complexes succinate dehydrogenase (complex II, CII), ubiquinol-cytochrome c oxidoreductase (cytochrome b-c1 complex, complex III, CIII) and cytochrome c oxidase (complex IV, CIV), that cooperate to transfer electrons derived from NADH and succinate to molecular oxygen, creating an electrochemical gradient over the inner membrane that drives transmembrane transport and the ATP synthase. Cytochrome c oxidase is the component of the respiratory chain that catalyzes the reduction of oxygen to water. Electrons originating from reduced cytochrome c in the intermembrane space (IMS) are transferred via the dinuclear copper A center (CU(A)) of subunit 2 and heme A of subunit 1 to the active site in subunit 1, a binuclear center (BNC) formed by heme A3 and copper B (CU(B)). The BNC reduces molecular oxygen to 2 water molecules using 4 electrons from cytochrome c in the IMS and 4 protons from the mitochondrial matrix. The sequence is that of Cytochrome c oxidase subunit 3 (COIII) from Metridium senile (Brown sea anemone).